The primary structure comprises 337 residues: Glyceraldehyde-3-phosphate dehydrogenase 2 (337 aa).

NADP(+) is bound by residues 11–12, Asp35, Arg80, and Thr122; that span reads RI. D-glyceraldehyde 3-phosphate-binding positions include 153-155, Thr184, Arg199, 212-213, and Arg235; these read SCT and TG. Residue Cys154 is the Nucleophile of the active site. Asn317 serves as a coordination point for NADP(+).

It belongs to the glyceraldehyde-3-phosphate dehydrogenase family. In terms of assembly, homotetramer.

The protein localises to the cytoplasm. It carries out the reaction D-glyceraldehyde 3-phosphate + phosphate + NADP(+) = (2R)-3-phospho-glyceroyl phosphate + NADPH + H(+). It catalyses the reaction D-glyceraldehyde 3-phosphate + phosphate + NAD(+) = (2R)-3-phospho-glyceroyl phosphate + NADH + H(+). It participates in carbohydrate biosynthesis; Calvin cycle. In terms of biological role, gap2 has a major role in carbon fixation as a component of the Calvin cycle. Catalyzes the oxidative phosphorylation of glyceraldehyde 3-phosphate (G3P) to 1,3-bisphosphoglycerate (BPG) using the cofactor NAD. The first reaction step involves the formation of a hemiacetal intermediate between G3P and a cysteine residue, and this hemiacetal intermediate is then oxidized to a thioester, with concomitant reduction of NAD to NADH. The reduced NADH is then exchanged with the second NAD, and the thioester is attacked by a nucleophilic inorganic phosphate to produce BPG. This chain is Glyceraldehyde-3-phosphate dehydrogenase 2 (gap2), found in Trichormus variabilis (strain ATCC 29413 / PCC 7937) (Anabaena variabilis).